Here is a 278-residue protein sequence, read N- to C-terminus: Urease accessory protein UreD (278 aa).

It belongs to the UreD family. As to quaternary structure, ureD, UreF and UreG form a complex that acts as a GTP-hydrolysis-dependent molecular chaperone, activating the urease apoprotein by helping to assemble the nickel containing metallocenter of UreC. The UreE protein probably delivers the nickel.

Its subcellular location is the cytoplasm. Its function is as follows. Required for maturation of urease via the functional incorporation of the urease nickel metallocenter. In Staphylococcus aureus (strain JH1), this protein is Urease accessory protein UreD.